We begin with the raw amino-acid sequence, 61 residues long: Small ribosomal subunit protein uS14B (61 aa).

Zn(2+) is bound by residues Cys-24, Cys-27, Cys-40, and Cys-43.

This sequence belongs to the universal ribosomal protein uS14 family. Zinc-binding uS14 subfamily. Part of the 30S ribosomal subunit. Contacts proteins S3 and S10. Requires Zn(2+) as cofactor.

Binds 16S rRNA, required for the assembly of 30S particles and may also be responsible for determining the conformation of the 16S rRNA at the A site. The protein is Small ribosomal subunit protein uS14B of Limosilactobacillus reuteri (strain DSM 20016) (Lactobacillus reuteri).